The sequence spans 215 residues: Cytochrome b6 (215 aa).

A helical membrane pass occupies residues 32 to 52 (IFYCLGGITLTCFLVQVATGF). A heme c-binding site is contributed by C35. Residues H86 and H100 each contribute to the heme b site. 3 consecutive transmembrane segments (helical) span residues 90-110 (ASMM…TGGF), 116-136 (LTWV…VTGY), and 186-206 (LHTF…FLMI). Positions 187 and 202 each coordinate heme b.

The protein belongs to the cytochrome b family. PetB subfamily. As to quaternary structure, the 4 large subunits of the cytochrome b6-f complex are cytochrome b6, subunit IV (17 kDa polypeptide, PetD), cytochrome f and the Rieske protein, while the 4 small subunits are PetG, PetL, PetM and PetN. The complex functions as a dimer. It depends on heme b as a cofactor. The cofactor is heme c.

Its subcellular location is the plastid. The protein localises to the chloroplast thylakoid membrane. Its function is as follows. Component of the cytochrome b6-f complex, which mediates electron transfer between photosystem II (PSII) and photosystem I (PSI), cyclic electron flow around PSI, and state transitions. In Marchantia polymorpha (Common liverwort), this protein is Cytochrome b6.